We begin with the raw amino-acid sequence, 283 residues long: Adenosyl-chloride synthase (283 aa).

Substrate contacts are provided by residues D11, 70–72, and 128–131; these read YVY and TWYG. G131 provides a ligand contact to chloride.

It belongs to the SAM hydrolase / SAM-dependent halogenase family. As to quaternary structure, homotrimer.

It carries out the reaction chloride + S-adenosyl-L-methionine = 5'-chloro-5'-deoxyadenosine + L-methionine. Its function is as follows. Involved in the biosynthesis of the proteosome inhibitor salinosporamide A (SalA). Catalyzes the halogenation of S-adenosyl-L-methionine (SAM) with chloride to generate 5'-chloro-5'-deoxyadenosine (5'-CIDA) and L-methionine. It can also use bromide and iodide, producing halogenated 5'-deoxyadenosine (5'-XDA) and L-methionine, however no halogenase activity is detected in the presence of fluoride. In Salinispora tropica (strain ATCC BAA-916 / DSM 44818 / JCM 13857 / NBRC 105044 / CNB-440), this protein is Adenosyl-chloride synthase.